The primary structure comprises 340 residues: MQSIPIKHVGADNVSQLIDRFERQYVYLRLSVTDVCNFRCNYCLPDGYKPPSHRQQFLSISEIQRVVRAFADLGTEKVRITGGEPTLRKDFLEIAHTVSQTNGIKKVALTTNGYRMERDIDLWQQAGITDINVSVDSLDTRQFQLITGENKLQSILKGIDRAFEIGYRKIKVNAVLMKQYTAPELDKFLAWIKDKPIQMRFIELMETGEMDSFFKAQHLSGQSVMQRLLQEGWQLQPKALSDGPAKVLSHPDYQGEIGLIMPYEKNFCASCNRLRVSALGKLHLCLFGEEGIDLRDLLSEDTQQAQLKARLKAALQGKREHHYLHIGDSGIRNNLASIGG.

Positions R20–K246 constitute a Radical SAM core domain. R29 serves as a coordination point for GTP. C36 and C40 together coordinate [4Fe-4S] cluster. Y42 contributes to the S-adenosyl-L-methionine binding site. C43 is a binding site for [4Fe-4S] cluster. R79 provides a ligand contact to GTP. S-adenosyl-L-methionine is bound at residue G83. T110 serves as a coordination point for GTP. S134 contributes to the S-adenosyl-L-methionine binding site. Residue K171 participates in GTP binding. M205 is a binding site for S-adenosyl-L-methionine. [4Fe-4S] cluster contacts are provided by C268 and C271. R273–R275 provides a ligand contact to GTP. Residue C285 participates in [4Fe-4S] cluster binding.

It belongs to the radical SAM superfamily. MoaA family. As to quaternary structure, monomer and homodimer. [4Fe-4S] cluster serves as cofactor.

The catalysed reaction is GTP + AH2 + S-adenosyl-L-methionine = (8S)-3',8-cyclo-7,8-dihydroguanosine 5'-triphosphate + 5'-deoxyadenosine + L-methionine + A + H(+). It participates in cofactor biosynthesis; molybdopterin biosynthesis. Catalyzes the cyclization of GTP to (8S)-3',8-cyclo-7,8-dihydroguanosine 5'-triphosphate. In Actinobacillus pleuropneumoniae serotype 5b (strain L20), this protein is GTP 3',8-cyclase.